The primary structure comprises 200 residues: Dephospho-CoA kinase (200 aa).

The DPCK domain occupies 4 to 200; the sequence is TIGLTGSVAT…TFIERFVNNK (197 aa). Residue 12–17 coordinates ATP; the sequence is ATGKST.

The protein belongs to the CoaE family.

The protein localises to the cytoplasm. The catalysed reaction is 3'-dephospho-CoA + ATP = ADP + CoA + H(+). It functions in the pathway cofactor biosynthesis; coenzyme A biosynthesis; CoA from (R)-pantothenate: step 5/5. Functionally, catalyzes the phosphorylation of the 3'-hydroxyl group of dephosphocoenzyme A to form coenzyme A. The polypeptide is Dephospho-CoA kinase (Listeria innocua serovar 6a (strain ATCC BAA-680 / CLIP 11262)).